The following is a 301-amino-acid chain: GTPase Era (301 aa).

An Era-type G domain is found at Y7–E175. Residues G15–S22 are G1. G15 to S22 serves as a coordination point for GTP. The G2 stretch occupies residues Q41–H45. Positions D62–G65 are G3. GTP-binding positions include D62–L66 and N124–D127. A G4 region spans residues N124 to D127. A G5 region spans residues I154–A156. The region spanning L206–S283 is the KH type-2 domain.

It belongs to the TRAFAC class TrmE-Era-EngA-EngB-Septin-like GTPase superfamily. Era GTPase family. Monomer.

The protein localises to the cytoplasm. The protein resides in the cell inner membrane. Its function is as follows. An essential GTPase that binds both GDP and GTP, with rapid nucleotide exchange. Plays a role in 16S rRNA processing and 30S ribosomal subunit biogenesis and possibly also in cell cycle regulation and energy metabolism. The protein is GTPase Era of Shigella flexneri serotype 5b (strain 8401).